We begin with the raw amino-acid sequence, 388 residues long: Homeobox protein XHOX-3 (388 aa).

2 disordered regions span residues 30 to 109 (AVGS…SDFY) and 131 to 163 (SAGQ…FSAC). Polar residues-rich tracts occupy residues 68–81 (ATGQ…QLRI) and 91–103 (DSLS…SSSD). Residues 168-227 (MRRYRTAFTREQIARLEKEFYRENYVSRPRRCELAAALNLPETTIKVWFQNRRMKDKRQR) constitute a DNA-binding region (homeobox).

It belongs to the even-skipped homeobox family.

The protein resides in the nucleus. In terms of biological role, may be required for posterior development and development of normal embryonic axial pattern. This chain is Homeobox protein XHOX-3 (xhox3), found in Xenopus laevis (African clawed frog).